Here is a 318-residue protein sequence, read N- to C-terminus: Peroxisomal adenine nucleotide carrier 1 (318 aa).

Solcar repeat units follow at residues 5–94, 104–184, and 202–296; these read LESL…FKRL, IGTK…LKQR, and LSAF…ISAS. Helical transmembrane passes span 8–28, 104–124, 158–178, 201–221, 252–272, and 284–304; these read LAEA…LYPL, IGTK…AIAT, FDGL…YTVF, SLSA…ATCL, VLSV…FKGL, and ALLL…ILAL.

The protein belongs to the mitochondrial carrier (TC 2.A.29) family.

It localises to the peroxisome membrane. Peroxisomal adenine nucleotide transporter catalyzing the counterexchange of ATP with AMP. ATP is needed by reactions that generate acyl-CoA for peroxisomal fatty acid beta-oxidation during postgerminative growth. Required for the conversion of seed-reserved triacylglycerols into sucrose that is necessary for growth before the onset of photosynthesis. The sequence is that of Peroxisomal adenine nucleotide carrier 1 (PNC1) from Glycine max (Soybean).